Reading from the N-terminus, the 467-residue chain is MRLRLPVVCFLWEIAMIVLFGIFVRYNDEADPHWSEFMKAQNITSDIQNDYYFRYPSFQDVHVMIFVGFGFLMTFLKRYGFGSVAFNFLLAAFGIQWAILMQGWFHTFKNGKILIGVESLINADFCVGSVCIAFGAILGKVSPVQIMVMTLFQVTLFAVNEWILLNLLHVNDAGGSMTIHTFGAYFGLTVAWILNRPRLKQTNDKEGSVYVSDLFSMIGTLFLWMFWPSFNSAVSYHGDAQHRAAINTYCSLAACVLTTVAISSVVNKKGKLEMVHIQNATLAGGVAVGTAAEMMLTPYGSLIVGFICGIVSTLGFTYCSPFLSNKLRLHDTCGIHNLHAMPGLIGGIVGAVTAACATEAVYTADGLKKMFRFEGDYATRTPSMQGGYQAAGLCVSLAFGLVGGTVVGCILKLPIWGDPSDENCFDDEVYWELPEEDEEEHLGAANQYVTHLPENFKLPDRTEVAFK.

Residues methionine 1–leucine 3 lie on the Cytoplasmic side of the membrane. Residues arginine 4–valine 24 form a helical membrane-spanning segment. Over arginine 25–tyrosine 55 the chain is Extracellular. The N-linked (GlcNAc...) asparagine glycan is linked to asparagine 42. Residues proline 56–leucine 76 traverse the membrane as a helical segment. Topologically, residues lysine 77–glycine 80 are cytoplasmic. The chain crosses the membrane as a helical span at residues phenylalanine 81–methionine 101. At glutamine 102–serine 119 the chain is on the extracellular side. Residues leucine 120–glycine 139 traverse the membrane as a helical segment. The Cytoplasmic portion of the chain corresponds to lysine 140–glutamine 145. Residues isoleucine 146 to leucine 168 traverse the membrane as a helical segment. Over histidine 169–alanine 173 the chain is Extracellular. The chain crosses the membrane as a helical span at residues glycine 174–leucine 194. Residues asparagine 195–aspartate 213 are Cytoplasmic-facing. A helical transmembrane segment spans residues leucine 214–valine 234. The Extracellular segment spans residues serine 235 to alanine 245. A helical transmembrane segment spans residues isoleucine 246–valine 266. The Cytoplasmic portion of the chain corresponds to asparagine 267–lysine 271. A helical membrane pass occupies residues leucine 272–alanine 292. Residues glutamate 293–methionine 295 are Extracellular-facing. A helical transmembrane segment spans residues leucine 296–phenylalanine 316. The Cytoplasmic portion of the chain corresponds to threonine 317 to asparagine 337. A helical transmembrane segment spans residues leucine 338 to threonine 358. The Extracellular segment spans residues glutamate 359–alanine 390. The chain crosses the membrane as a helical span at residues alanine 391–leucine 411. Over lysine 412–lysine 467 the chain is Cytoplasmic.

It belongs to the ammonium transporter (TC 2.A.49) family. Rh subfamily. Homotrimer.

The protein localises to the apical cell membrane. Its function is as follows. Functions as an ammonia transporter. This Xenopus tropicalis (Western clawed frog) protein is Ammonium transporter Rh type C (rhcg).